We begin with the raw amino-acid sequence, 350 residues long: D-guloside 3-dehydrogenase (350 aa).

It belongs to the zinc-containing alcohol dehydrogenase family. The cofactor is Zn(2+).

The catalysed reaction is a D-guloside + NAD(+) = a 3-dehydro-D-guloside + NADH + H(+). Functionally, catalyzes the NAD(+)-dependent oxidation of the hydroxyl group at C3 of D-gulosides leading to 3-dehydro-D-gulosides. Probably functions in a metabolic pathway that transforms D-gulosides to D-glucosides. Is also able to catalyze the reverse reactions, i.e. the NADH-dependent reduction of the oxo group at C3 of 3-dehydro-D-gulosides leading to D-gulosides. In vitro, can oxidize D-gulose and methyl beta-D-guloside, and reduce methyl alpha-3-dehydro-D-guloside and methyl beta-3-dehydro-D-guloside. However, the actual specific physiological substrates for this metabolic pathway are unknown. The sequence is that of D-guloside 3-dehydrogenase (ycjQ) from Escherichia coli (strain K12).